A 609-amino-acid chain; its full sequence is Probable ubiquitin-conjugating enzyme E2 25 (609 aa).

Disordered regions lie at residues 70–99 (EEDE…LDPE) and 151–185 (ADKE…SQFS). Low complexity predominate over residues 156 to 178 (ASSSKSSHANNGNNSSKKATKAS). Residues 332–492 (DWAKRIQDEW…TFILSLKTMV (161 aa)) enclose the UBC core domain. Cys418 functions as the Glycyl thioester intermediate in the catalytic mechanism.

Belongs to the ubiquitin-conjugating enzyme family. As to expression, expressed in seeds, pistils, siliques, hypocotyls and leaves.

The enzyme catalyses S-ubiquitinyl-[E1 ubiquitin-activating enzyme]-L-cysteine + [E2 ubiquitin-conjugating enzyme]-L-cysteine = [E1 ubiquitin-activating enzyme]-L-cysteine + S-ubiquitinyl-[E2 ubiquitin-conjugating enzyme]-L-cysteine.. It functions in the pathway protein modification; protein ubiquitination. Accepts the ubiquitin from the E1 complex and catalyzes its covalent attachment to other proteins. This chain is Probable ubiquitin-conjugating enzyme E2 25 (UBC25), found in Arabidopsis thaliana (Mouse-ear cress).